Here is a 763-residue protein sequence, read N- to C-terminus: Lysine-specific histone demethylase 1 homolog 2 (763 aa).

One can recognise an SWIRM domain in the interval 53 to 152 (QRETETEALI…FGVSAAFPAS (100 aa)). FAD contacts are provided by Glu-192, Arg-194, Arg-200, and Glu-571.

The protein belongs to the flavin monoamine oxidase family. Requires FAD as cofactor.

Probable histone demethylase. The chain is Lysine-specific histone demethylase 1 homolog 2 from Oryza sativa subsp. japonica (Rice).